Here is a 234-residue protein sequence, read N- to C-terminus: tRNA (guanine-N(1)-)-methyltransferase (234 aa).

S-adenosyl-L-methionine is bound by residues G115 and 135–140; that span reads VGDYIL.

It belongs to the RNA methyltransferase TrmD family. Homodimer.

The protein resides in the cytoplasm. The catalysed reaction is guanosine(37) in tRNA + S-adenosyl-L-methionine = N(1)-methylguanosine(37) in tRNA + S-adenosyl-L-homocysteine + H(+). Its function is as follows. Specifically methylates guanosine-37 in various tRNAs. This is tRNA (guanine-N(1)-)-methyltransferase from Rickettsia peacockii (strain Rustic).